The primary structure comprises 311 residues: 4-hydroxy-3-methylbut-2-enyl diphosphate reductase (311 aa).

Cysteine 12 serves as a coordination point for [4Fe-4S] cluster. The (2E)-4-hydroxy-3-methylbut-2-enyl diphosphate site is built by histidine 41 and histidine 74. Dimethylallyl diphosphate contacts are provided by histidine 41 and histidine 74. The isopentenyl diphosphate site is built by histidine 41 and histidine 74. A [4Fe-4S] cluster-binding site is contributed by cysteine 96. Histidine 124 is a binding site for (2E)-4-hydroxy-3-methylbut-2-enyl diphosphate. Residue histidine 124 coordinates dimethylallyl diphosphate. Histidine 124 is an isopentenyl diphosphate binding site. The active-site Proton donor is the glutamate 126. Threonine 167 is a (2E)-4-hydroxy-3-methylbut-2-enyl diphosphate binding site. Position 197 (cysteine 197) interacts with [4Fe-4S] cluster. Positions 225, 226, 227, and 269 each coordinate (2E)-4-hydroxy-3-methylbut-2-enyl diphosphate. The dimethylallyl diphosphate site is built by serine 225, serine 226, asparagine 227, and serine 269. Residues serine 225, serine 226, asparagine 227, and serine 269 each contribute to the isopentenyl diphosphate site.

Belongs to the IspH family. The cofactor is [4Fe-4S] cluster.

The catalysed reaction is isopentenyl diphosphate + 2 oxidized [2Fe-2S]-[ferredoxin] + H2O = (2E)-4-hydroxy-3-methylbut-2-enyl diphosphate + 2 reduced [2Fe-2S]-[ferredoxin] + 2 H(+). It catalyses the reaction dimethylallyl diphosphate + 2 oxidized [2Fe-2S]-[ferredoxin] + H2O = (2E)-4-hydroxy-3-methylbut-2-enyl diphosphate + 2 reduced [2Fe-2S]-[ferredoxin] + 2 H(+). Its pathway is isoprenoid biosynthesis; dimethylallyl diphosphate biosynthesis; dimethylallyl diphosphate from (2E)-4-hydroxy-3-methylbutenyl diphosphate: step 1/1. It functions in the pathway isoprenoid biosynthesis; isopentenyl diphosphate biosynthesis via DXP pathway; isopentenyl diphosphate from 1-deoxy-D-xylulose 5-phosphate: step 6/6. In terms of biological role, catalyzes the conversion of 1-hydroxy-2-methyl-2-(E)-butenyl 4-diphosphate (HMBPP) into a mixture of isopentenyl diphosphate (IPP) and dimethylallyl diphosphate (DMAPP). Acts in the terminal step of the DOXP/MEP pathway for isoprenoid precursor biosynthesis. The protein is 4-hydroxy-3-methylbut-2-enyl diphosphate reductase of Aeromonas hydrophila subsp. hydrophila (strain ATCC 7966 / DSM 30187 / BCRC 13018 / CCUG 14551 / JCM 1027 / KCTC 2358 / NCIMB 9240 / NCTC 8049).